The primary structure comprises 280 residues: Ribosomal RNA small subunit methyltransferase A (280 aa).

S-adenosyl-L-methionine contacts are provided by histidine 13, leucine 15, glycine 40, glutamate 61, aspartate 85, and asparagine 106. The interval arginine 258–glutamine 280 is disordered.

Belongs to the class I-like SAM-binding methyltransferase superfamily. rRNA adenine N(6)-methyltransferase family. RsmA subfamily.

It is found in the cytoplasm. The enzyme catalyses adenosine(1518)/adenosine(1519) in 16S rRNA + 4 S-adenosyl-L-methionine = N(6)-dimethyladenosine(1518)/N(6)-dimethyladenosine(1519) in 16S rRNA + 4 S-adenosyl-L-homocysteine + 4 H(+). Functionally, specifically dimethylates two adjacent adenosines (A1518 and A1519) in the loop of a conserved hairpin near the 3'-end of 16S rRNA in the 30S particle. May play a critical role in biogenesis of 30S subunits. The chain is Ribosomal RNA small subunit methyltransferase A from Alcanivorax borkumensis (strain ATCC 700651 / DSM 11573 / NCIMB 13689 / SK2).